Consider the following 215-residue polypeptide: Ribonuclease HII (215 aa).

One can recognise an RNase H type-2 domain in the interval 19–214 (KNVIGVDEAG…KILETEEEKT (196 aa)). 3 residues coordinate a divalent metal cation: Asp25, Glu26, and Asp121.

It belongs to the RNase HII family. The cofactor is Mn(2+). Mg(2+) is required as a cofactor.

The protein resides in the cytoplasm. It carries out the reaction Endonucleolytic cleavage to 5'-phosphomonoester.. Functionally, endonuclease that specifically degrades the RNA of RNA-DNA hybrids. The sequence is that of Ribonuclease HII from Fusobacterium nucleatum subsp. nucleatum (strain ATCC 25586 / DSM 15643 / BCRC 10681 / CIP 101130 / JCM 8532 / KCTC 2640 / LMG 13131 / VPI 4355).